A 321-amino-acid polypeptide reads, in one-letter code: NADH-quinone oxidoreductase subunit H (321 aa).

8 helical membrane passes run 9–29 (LLAIVKAIVTLLSVVTIGAYM), 78–98 (IIFTLAPIIAFTSLLLVFAIM), 111–131 (IGILFFLMMAGISVYAILLGG), 156–176 (FLGLSIMGVVAQAGSFNISTI), 183–203 (IWNIVPQFFGFITFYLAGLAI), 234–254 (FFIGEYISLVTISALTITLFF), 262–282 (LPPYIWFIIKTTVFIIIFILI), and 296–316 (ILGWTICLPLTLMNLLVTAIV).

It belongs to the complex I subunit 1 family. NDH-1 is composed of 14 different subunits. Subunits NuoA, H, J, K, L, M, N constitute the membrane sector of the complex.

It localises to the cell membrane. The catalysed reaction is a quinone + NADH + 5 H(+)(in) = a quinol + NAD(+) + 4 H(+)(out). In terms of biological role, NDH-1 shuttles electrons from NADH, via FMN and iron-sulfur (Fe-S) centers, to quinones in the respiratory chain. The immediate electron acceptor for the enzyme in this species is believed to be ubiquinone. Couples the redox reaction to proton translocation (for every two electrons transferred, four hydrogen ions are translocated across the cytoplasmic membrane), and thus conserves the redox energy in a proton gradient. This subunit may bind ubiquinone. The protein is NADH-quinone oxidoreductase subunit H of Baumannia cicadellinicola subsp. Homalodisca coagulata.